Reading from the N-terminus, the 125-residue chain is UPF0102 protein mlr4633 (125 aa).

The protein belongs to the UPF0102 family.

The protein is UPF0102 protein mlr4633 of Mesorhizobium japonicum (strain LMG 29417 / CECT 9101 / MAFF 303099) (Mesorhizobium loti (strain MAFF 303099)).